We begin with the raw amino-acid sequence, 276 residues long: Large ribosomal subunit protein uL2 (276 aa).

A disordered region spans residues 219 to 276; the sequence is TVRGSVMNPNDHPHGGGEGRSPIGRPSPVTPWGKPALGYKTRKKNKASNKLIVSRRTK. Over residues 258 to 276 the composition is skewed to basic residues; it reads KTRKKNKASNKLIVSRRTK.

It belongs to the universal ribosomal protein uL2 family. As to quaternary structure, part of the 50S ribosomal subunit. Forms a bridge to the 30S subunit in the 70S ribosome.

In terms of biological role, one of the primary rRNA binding proteins. Required for association of the 30S and 50S subunits to form the 70S ribosome, for tRNA binding and peptide bond formation. It has been suggested to have peptidyltransferase activity; this is somewhat controversial. Makes several contacts with the 16S rRNA in the 70S ribosome. This chain is Large ribosomal subunit protein uL2, found in Clostridioides difficile (strain 630) (Peptoclostridium difficile).